Here is a 544-residue protein sequence, read N- to C-terminus: Inward rectifier potassium channel irk-1 (544 aa).

Over 1–109 (MTLSVPDCAE…IFTTMIDVKW (109 aa)) the chain is Cytoplasmic. The chain crosses the membrane as a helical span at residues 110–134 (RWMLMLFASAFVLSWSIFGTTYYLI). The Extracellular segment spans residues 135–158 (ALVHGDLSLPTPVNHTACVMNLDS). Positions 159-170 (VYSSFLFAVETH) form an intramembrane region, helical; Pore-forming. An intramembrane region (pore-forming) is located at residues 171–177 (HTIGYGH). The short motif at 172-177 (TIGYGH) is the Selectivity filter element. At 178-186 (RYITTECYL) the chain is on the extracellular side. A helical transmembrane segment spans residues 187–208 (AGAIVCLQAICALLLQSFMVGI). Residues 209-544 (VFAKMARPKK…PIHIEIVSET (336 aa)) lie on the Cytoplasmic side of the membrane. Disordered stretches follow at residues 411–448 (HKLEDNRSSDSTPLPSPSPYSYPSTPLNHFQSSSNSPV) and 512–533 (LSDLEEECSDSGSPTKCQSPPV). Residues 438-448 (NHFQSSSNSPV) show a composition bias toward polar residues.

It belongs to the inward rectifier-type potassium channel (TC 1.A.2.1) family. As to expression, expressed in neurons in the head and tail with no expression detected in non-neuronal cells in these regions. Also detected in the egg-laying system of adult hermaphordites with strong expression in the HSN motor neurons and weak expression in vulval muscles.

Its subcellular location is the membrane. It is found in the perikaryon. The protein resides in the cell projection. Its function is as follows. Inward rectifier potassium channels are characterized by a greater tendency to allow potassium to flow into the cell rather than out of it. Required for modulation of the activity of the hermaphrodite-specific neurons (HSNs) by the G-protein coupled neuropeptide receptor egl-6 which in turn controls egg-laying behavior. The sequence is that of Inward rectifier potassium channel irk-1 (irk-1) from Caenorhabditis elegans.